Here is a 503-residue protein sequence, read N- to C-terminus: Probable cytosol aminopeptidase (503 aa).

K270 and D275 together coordinate Mn(2+). K282 is an active-site residue. Residues D293, D352, and E354 each coordinate Mn(2+). R356 is a catalytic residue.

The protein belongs to the peptidase M17 family. It depends on Mn(2+) as a cofactor.

It localises to the cytoplasm. It catalyses the reaction Release of an N-terminal amino acid, Xaa-|-Yaa-, in which Xaa is preferably Leu, but may be other amino acids including Pro although not Arg or Lys, and Yaa may be Pro. Amino acid amides and methyl esters are also readily hydrolyzed, but rates on arylamides are exceedingly low.. The enzyme catalyses Release of an N-terminal amino acid, preferentially leucine, but not glutamic or aspartic acids.. In terms of biological role, presumably involved in the processing and regular turnover of intracellular proteins. Catalyzes the removal of unsubstituted N-terminal amino acids from various peptides. The sequence is that of Probable cytosol aminopeptidase from Salmonella typhi.